A 130-amino-acid chain; its full sequence is Small ribosomal subunit protein uS11 (130 aa).

This sequence belongs to the universal ribosomal protein uS11 family. As to quaternary structure, part of the 30S ribosomal subunit. Interacts with proteins S7 and S18. Binds to IF-3.

Functionally, located on the platform of the 30S subunit, it bridges several disparate RNA helices of the 16S rRNA. Forms part of the Shine-Dalgarno cleft in the 70S ribosome. The chain is Small ribosomal subunit protein uS11 from Campylobacter hominis (strain ATCC BAA-381 / DSM 21671 / CCUG 45161 / LMG 19568 / NCTC 13146 / CH001A).